Consider the following 108-residue polypeptide: MMKGQLAGLMKQAQQMQENMKKMQEQLALIEVEGQSGAGLVKVTMTCKNDVRRVSIDPSLLADDKDMLEDLVAAAFNDAVRKAEATAQEKMGGMTSGLPLPPGFKLPF.

Positions 87 to 108 (AQEKMGGMTSGLPLPPGFKLPF) are disordered. Residues 99–108 (PLPPGFKLPF) show a composition bias toward pro residues.

Belongs to the YbaB/EbfC family. Homodimer.

It is found in the cytoplasm. It localises to the nucleoid. Its function is as follows. Binds to DNA and alters its conformation. May be involved in regulation of gene expression, nucleoid organization and DNA protection. This Paraburkholderia phytofirmans (strain DSM 17436 / LMG 22146 / PsJN) (Burkholderia phytofirmans) protein is Nucleoid-associated protein Bphyt_1827.